Here is a 224-residue protein sequence, read N- to C-terminus: Non-structural protein V (224 aa).

The segment covering 54–65 (QKNIQHPTASHQ) has biased composition (polar residues). 2 disordered regions span residues 54-96 (QKNI…DPEP) and 150-171 (TEFK…GGHR). Positions 170, 189, 193, 205, 207, 210, 214, and 217 each coordinate Zn(2+).

This sequence belongs to the paramyxoviruses V protein family. Interacts with host IFIH1/MDA5 and DHX58/LGP2. Forms with host DDB1, CUL4A, STAT1, STAT2 and STAT3 the mumps virus V-dependent complex (VDC).

Its subcellular location is the virion. The protein resides in the host cytoplasm. Its function is as follows. Plays an essential role in the inhibition of host immune response. Prevents the establishment of cellular antiviral state by blocking interferon-alpha/beta (IFN-alpha/beta) production and signaling pathway. Interacts with host IFIH1/MDA5 and DHX58/LGP2 to inhibit the transduction pathway involved in the activation of IFN-beta promoter, thus protecting the virus against cell antiviral state. Blocks the type I and II interferon signaling pathways by interacting with host STAT1, STAT2 and STAT3, and mediating their ubiquitination and subsequent proteasomal degradation. This is Non-structural protein V from Mumps virus (strain SBL) (MuV).